Here is a 380-residue protein sequence, read N- to C-terminus: Alcohol dehydrogenase 2 (380 aa).

Zn(2+)-binding residues include Cys48, Thr50, His70, Cys100, Cys103, Cys106, Cys114, and Cys178. Thr50 and His70 together coordinate an alcohol. NAD(+) is bound at residue Thr50. NAD(+)-binding positions include 203-208 (GLGAVG), Asp227, Arg232, Thr273, Val296, 296-298 (VGV), Phe323, and Arg373.

Belongs to the zinc-containing alcohol dehydrogenase family. As to quaternary structure, homodimer. Homotetramer. Requires Zn(2+) as cofactor.

The protein localises to the cytoplasm. The catalysed reaction is a primary alcohol + NAD(+) = an aldehyde + NADH + H(+). It carries out the reaction a secondary alcohol + NAD(+) = a ketone + NADH + H(+). In Solanum tuberosum (Potato), this protein is Alcohol dehydrogenase 2 (ADH2).